The sequence spans 516 residues: Probable serine/threonine-protein kinase ECU02_0550 (516 aa).

Residues 4 to 230 (YKLRQVIGEG…ASEALMHRSF (227 aa)) enclose the Protein kinase domain. Residues 10 to 18 (IGEGASSTV) and Lys-32 each bind ATP. Residue Asp-120 is the Proton acceptor of the active site.

It belongs to the protein kinase superfamily. CAMK Ser/Thr protein kinase family.

It carries out the reaction L-seryl-[protein] + ATP = O-phospho-L-seryl-[protein] + ADP + H(+). The enzyme catalyses L-threonyl-[protein] + ATP = O-phospho-L-threonyl-[protein] + ADP + H(+). The protein is Probable serine/threonine-protein kinase ECU02_0550 of Encephalitozoon cuniculi (strain GB-M1) (Microsporidian parasite).